The primary structure comprises 252 residues: RNA-binding protein 2 (252 aa).

Disordered regions lie at residues 1–34 (MADG…PSGV) and 232–252 (RLQF…RGKR). The RRM domain maps to 152–238 (STLYVEGLPS…SYLRLQFSRS (87 aa)). A compositionally biased stretch (gly residues) spans 242–252 (RSGGPGPRGKR).

Its function is as follows. Probable RNA-binding protein. In Medicago truncatula (Barrel medic), this protein is RNA-binding protein 2.